The primary structure comprises 444 residues: Probable galactarate/D-glucarate transporter GarP (444 aa).

Over 1–11 (MILDTVDEKKK) the chain is Cytoplasmic. The helical transmembrane segment at 12-32 (GVHTRYLILLIIFIVTAVNYA) threads the bilayer. Over 33–56 (DRATLSIAGTEVAKELQLSAVSMG) the chain is Periplasmic. The helical transmembrane segment at 57–77 (YIFSAFGWAYLLMQIPGGWLL) threads the bilayer. Over 78–89 (DKFGSKKVYTYS) the chain is Cytoplasmic. A run of 2 helical transmembrane segments spans residues 90 to 110 (LFFW…PLAW) and 111 to 131 (AGIS…PSFP). Over 132 to 157 (ANARIVAAWFPTKERGTASAIFNSAQ) the chain is Cytoplasmic. 2 helical membrane passes run 158-178 (YFSL…WGWE) and 179-199 (HVFT…IKLI). The Cytoplasmic segment spans residues 200-252 (HNPTDHPRMSAEELKFISENGAVVDMDHKKPGSAAASGPKLHYIKQLLSNRMM). The helical transmembrane segment at 253-273 (LGVFFGQYFINTITWFFLTWF) threads the bilayer. Residues 274–288 (PIYLVQEKGMSILKV) lie on the Periplasmic side of the membrane. The chain crosses the membrane as a helical span at residues 289-309 (GLVASIPALCGFAGGVLGGVF). Topologically, residues 310–319 (SDYLIKRGLS) are cytoplasmic. The chain crosses the membrane as a helical span at residues 320–340 (LTLARKLPIVLGMLLASTIIL). The Periplasmic segment spans residues 341-350 (CNYTNNTTLV). Residues 351 to 371 (VMLMALAFFGKGFGALGWPVI) form a helical membrane-spanning segment. Residues 372–385 (SDTAPKEIVGLCGG) are Cytoplasmic-facing. Residues 386–406 (VFNVFGNVASIVTPLVIGYLV) form a helical membrane-spanning segment. Residues 407 to 413 (SELHSFN) are Periplasmic-facing. The chain crosses the membrane as a helical span at residues 414-434 (AALVFVGCSALMAMVCYLFVV). Residues 435 to 444 (GDIKRMELQK) lie on the Cytoplasmic side of the membrane.

The protein belongs to the major facilitator superfamily. Phthalate permease family.

The protein localises to the cell inner membrane. It carries out the reaction galactarate(in) + H(+)(in) = galactarate(out) + H(+)(out). The catalysed reaction is D-glucarate(in) + H(+)(in) = D-glucarate(out) + H(+)(out). It catalyses the reaction (R)-glycerate(in) + H(+)(in) = (R)-glycerate(out) + H(+)(out). Functionally, probably involved in the uptake of galactarate and/or D-glucarate. May also transport D-glycerate. The sequence is that of Probable galactarate/D-glucarate transporter GarP from Escherichia coli (strain K12).